Consider the following 237-residue polypeptide: uncharacterized protein (237 aa).

Positions 4-237 (QFLIAHRGYS…VKFQIAAQLY (234 aa)) constitute a GP-PDE domain.

It to glycerophosphoryl diester phosphodiesterases (EC 3.1.4.46). This sequence to M.genitalium MG293.

This is an uncharacterized protein from Mycoplasma pneumoniae (strain ATCC 29342 / M129 / Subtype 1) (Mycoplasmoides pneumoniae).